Consider the following 219-residue polypeptide: UPF0502 protein Gura_3445 (219 aa).

Residues 162–181 (AGEPDLPDDTPAPPPEPARQ) form a disordered region.

The protein belongs to the UPF0502 family.

This chain is UPF0502 protein Gura_3445, found in Geotalea uraniireducens (strain Rf4) (Geobacter uraniireducens).